The following is a 522-amino-acid chain: Maturase K (522 aa).

It belongs to the intron maturase 2 family. MatK subfamily.

It localises to the plastid. Its subcellular location is the chloroplast. Usually encoded in the trnK tRNA gene intron. Probably assists in splicing its own and other chloroplast group II introns. This Micranthus junceus (Micranthus plantagineus var. junceus) protein is Maturase K.